The primary structure comprises 305 residues: Oxygen-dependent coproporphyrinogen-III oxidase (305 aa).

S98 contributes to the substrate binding site. A divalent metal cation-binding residues include H102 and H112. H112 (proton donor) is an active-site residue. 114–116 (NVR) is a substrate binding site. A divalent metal cation contacts are provided by H151 and H181. Residues 246 to 281 (YVEFNLVYDRGTLFGLQSGGRTESILMSMPPLARWE) form an important for dimerization region. 264–266 (GGR) contributes to the substrate binding site.

This sequence belongs to the aerobic coproporphyrinogen-III oxidase family. As to quaternary structure, homodimer. A divalent metal cation is required as a cofactor.

It localises to the cytoplasm. The catalysed reaction is coproporphyrinogen III + O2 + 2 H(+) = protoporphyrinogen IX + 2 CO2 + 2 H2O. The protein operates within porphyrin-containing compound metabolism; protoporphyrin-IX biosynthesis; protoporphyrinogen-IX from coproporphyrinogen-III (O2 route): step 1/1. In terms of biological role, involved in the heme biosynthesis. Catalyzes the aerobic oxidative decarboxylation of propionate groups of rings A and B of coproporphyrinogen-III to yield the vinyl groups in protoporphyrinogen-IX. This Vibrio vulnificus (strain CMCP6) protein is Oxygen-dependent coproporphyrinogen-III oxidase.